Here is a 142-residue protein sequence, read N- to C-terminus: Large ribosomal subunit protein bL17 (142 aa).

Belongs to the bacterial ribosomal protein bL17 family. In terms of assembly, part of the 50S ribosomal subunit. Contacts protein L32.

This chain is Large ribosomal subunit protein bL17, found in Wolbachia sp. subsp. Brugia malayi (strain TRS).